Here is a 283-residue protein sequence, read N- to C-terminus: Bifunctional protein FolD (283 aa).

Residues 157–159 (GNG) and isoleucine 224 contribute to the NADP(+) site.

This sequence belongs to the tetrahydrofolate dehydrogenase/cyclohydrolase family. In terms of assembly, homodimer.

It catalyses the reaction (6R)-5,10-methylene-5,6,7,8-tetrahydrofolate + NADP(+) = (6R)-5,10-methenyltetrahydrofolate + NADPH. The catalysed reaction is (6R)-5,10-methenyltetrahydrofolate + H2O = (6R)-10-formyltetrahydrofolate + H(+). Its pathway is one-carbon metabolism; tetrahydrofolate interconversion. Catalyzes the oxidation of 5,10-methylenetetrahydrofolate to 5,10-methenyltetrahydrofolate and then the hydrolysis of 5,10-methenyltetrahydrofolate to 10-formyltetrahydrofolate. This chain is Bifunctional protein FolD, found in Mycoplasmoides gallisepticum (strain R(low / passage 15 / clone 2)) (Mycoplasma gallisepticum).